The following is a 71-amino-acid chain: MRKSFYTWLMAQRNPKSNEPVAILADLAFEDSTFPKHTDDFEEVSRYLEDHASFSFNLGQFDQIWEDYLAH.

It belongs to the UPF0346 family.

The protein is UPF0346 protein str0441 of Streptococcus thermophilus (strain CNRZ 1066).